Reading from the N-terminus, the 410-residue chain is Transcription factor Dp-1 (410 aa).

Lys-3 is modified (N6-acetyllysine). Residue Ser-23 is modified to Phosphoserine. Residues 73–100 (SNTLVVGSPHTPSTHFASQNQPSDSSPW) are compositionally biased toward polar residues. A disordered region spans residues 73 to 116 (SNTLVVGSPHTPSTHFASQNQPSDSSPWSAGKRNRKGEKNGKGL). Residues 104–116 (KRNRKGEKNGKGL) show a composition bias toward basic residues. Residues 105 to 127 (RNRKGEKNGKGLRHFSMKVCEKV) form an interaction with CEBPA region. The DNA-binding element occupies 113 to 195 (GKGLRHFSMK…KKEIKWIGLP (83 aa)). The DEF box motif lies at 161–195 (DQKNIRRRVYDALNVLMAMNIISKEKKEIKWIGLP). Residues 204–277 (NLEVERQRRL…KKTVIDCSIS (74 aa)) form a dimerization region. The tract at residues 211–327 (RRLERIKQKQ…DLKMARSLVP (117 aa)) is enhances binding of RB protein to E2F. The interval 214–246 (ERIKQKQSQLQELILQQIAFKNLVQRNRHAEQQ) is DCB1. The interval 259 to 315 (LPFIIVNTSKKTVIDCSISNDKFEYLFNFDNTFEIHDDIEVLKRMGMACGLESGSCS) is DCB2. The interval 370–410 (GMLATSSNGSQYSGSRVETPVSYVGEDDEEDDDFNENDEDD) is disordered. Over residues 373 to 385 (ATSSNGSQYSGSR) the composition is skewed to polar residues. Residues 394 to 410 (GEDDEEDDDFNENDEDD) show a composition bias toward acidic residues.

This sequence belongs to the E2F/DP family. In terms of assembly, component of the E2F:DP transcription factor complex. Forms heterodimers with E2F family members. The complex can interact with hypophosphorylated retinoblastoma protein RB1 and related proteins (RBL1 and RBL2) that inhibit the E2F transactivation domain. This repression involves recruitment of histone deacetylase (HDAC). During the cell cycle, from mid-to-late G1 phase, RB family members become phosphorylated, detach from the DRTF1/E2F complex to render E2F transcriptionally active. Viral oncoproteins, notably E1A, T-antigen and HPV E7, are capable of sequestering RB protein, thus releasing the active complex. Part of the E2F6.com-1 complex in G0 phase is composed of E2F6, MGA, MAX, TFDP1, CBX3, BAT8, EUHMTASE1, RING1, RNF2, MBLR, L3MBTL2 YAF2. Component of the DREAM complex (also named LINC complex) at least composed of E2F4, E2F5, LIN9, LIN37, LIN52, LIN54, MYBL1, MYBL2, RBL1, RBL2, RBBP4, TFDP1 and TFDP2. The complex exists in quiescent cells where it represses cell cycle-dependent genes. It dissociates in S phase when LIN9, LIN37, LIN52 and LIN54 form a subcomplex that binds to MYBL2. The complex TFDP1:E2F1 interacts with CEBPA; the interaction prevents CEBPA binding to target gene promoters and represses its transcriptional activity. Post-translationally, phosphorylation by E2F1-bound cyclin A-CDK2, in the S phase, inhibits E2F-mediated DNA binding and transactivation. In terms of processing, ubiquitinated by the BCR(KBTBD5) complex, leading to its subsequent degradation. As to expression, highest levels in muscle. Also expressed in brain, placenta, liver and kidney. Lower levels in lung and pancreas. Not detected in heart.

Its subcellular location is the nucleus. It is found in the cytoplasm. Its function is as follows. Can stimulate E2F-dependent transcription. Binds DNA cooperatively with E2F family members through the E2 recognition site, 5'-TTTC[CG]CGC-3', found in the promoter region of a number of genes whose products are involved in cell cycle regulation or in DNA replication. The E2F1:DP complex appears to mediate both cell proliferation and apoptosis. Blocks adipocyte differentiation by repressing CEBPA binding to its target gene promoters. The protein is Transcription factor Dp-1 (TFDP1) of Homo sapiens (Human).